Reading from the N-terminus, the 687-residue chain is Dictomallein (687 aa).

Disordered regions lie at residues 1–45 (MGNG…SRRL) and 73–112 (TAGG…STSA). The region spanning 233-501 (PVFGTDADVQ…QAWIASRVLA (269 aa)) is the Peptidase M66 domain. Residue His393 coordinates Zn(2+). Glu394 is a catalytic residue. Positions 397 and 403 each coordinate Zn(2+).

It belongs to the dictomallein family. Zn(2+) serves as cofactor.

This Burkholderia mallei (strain NCTC 10247) protein is Dictomallein (dtmL).